The primary structure comprises 246 residues: Protein-glutamine gamma-glutamyltransferase (246 aa).

This sequence belongs to the bacillus TGase family.

It catalyses the reaction L-glutaminyl-[protein] + L-lysyl-[protein] = [protein]-L-lysyl-N(6)-5-L-glutamyl-[protein] + NH4(+). In terms of biological role, probably plays a role in the assembly of the spore coat proteins by catalyzing epsilon-(gamma-glutamyl)lysine cross-links. This is Protein-glutamine gamma-glutamyltransferase from Bacillus pumilus (strain SAFR-032).